The primary structure comprises 1321 residues: Probable serine/threonine-protein kinase fnkE (1321 aa).

FNIP repeat units follow at residues 108-149 (YNQL…NLSS), 150-191 (YNQP…DLSS), 192-233 (YNKL…DLSS), and 255-296 (YNKL…DISS). One can recognise a Protein kinase 1 domain in the interval 295 to 595 (SSYNQLLTPG…YNYVIKDSIM (301 aa)). ATP contacts are provided by residues 301–309 (LTPGTLSNN) and Lys325. Asp465 (proton acceptor) is an active-site residue. FNIP repeat units lie at residues 654 to 696 (FNHP…FNKF) and 741 to 783 (FNQP…LGSN). The 269-residue stretch at 860-1128 (WEIISTLGSG…EGDSVFEKYL (269 aa)) folds into the Protein kinase 2 domain. ATP is bound by residues 866–874 (LGSGNFGKV) and Lys895. Asp990 (proton acceptor) is an active-site residue. 2 FNIP repeats span residues 1160–1202 (YNQM…LGNE) and 1224–1268 (FNFT…LGSN).

It belongs to the protein kinase superfamily. STE Ser/Thr protein kinase family. The cofactor is Mg(2+).

It catalyses the reaction L-seryl-[protein] + ATP = O-phospho-L-seryl-[protein] + ADP + H(+). The enzyme catalyses L-threonyl-[protein] + ATP = O-phospho-L-threonyl-[protein] + ADP + H(+). The protein is Probable serine/threonine-protein kinase fnkE of Dictyostelium discoideum (Social amoeba).